Reading from the N-terminus, the 198-residue chain is Probable GTP-binding protein EngB (198 aa).

The 174-residue stretch at 22–195 (HRNEVAFVGR…IDKLFLEFAT (174 aa)) folds into the EngB-type G domain. GTP contacts are provided by residues 30–37 (GRSNVGKS), 57–61 (GKTRL), 75–78 (DLPG), 142–145 (TKSD), and 174–176 (YSS). Mg(2+) is bound by residues S37 and T59.

This sequence belongs to the TRAFAC class TrmE-Era-EngA-EngB-Septin-like GTPase superfamily. EngB GTPase family. The cofactor is Mg(2+).

Its function is as follows. Necessary for normal cell division and for the maintenance of normal septation. This is Probable GTP-binding protein EngB from Clostridium botulinum (strain Eklund 17B / Type B).